The chain runs to 216 residues: Adenylate kinase (216 aa).

Glycine 10–threonine 15 is a binding site for ATP. Residues serine 30–valine 59 are NMP. AMP-binding positions include threonine 31, arginine 36, alanine 57–valine 59, glycine 85–arginine 88, and glutamine 92. The interval glycine 126–aspartate 163 is LID. Arginine 127 is an ATP binding site. Cysteine 130 and cysteine 133 together coordinate Zn(2+). Threonine 136–tyrosine 137 contributes to the ATP binding site. Zn(2+) is bound by residues cysteine 150 and cysteine 153. The AMP site is built by arginine 160 and arginine 171. Glutamine 199 lines the ATP pocket.

This sequence belongs to the adenylate kinase family. As to quaternary structure, monomer.

The protein localises to the cytoplasm. It catalyses the reaction AMP + ATP = 2 ADP. The protein operates within purine metabolism; AMP biosynthesis via salvage pathway; AMP from ADP: step 1/1. Functionally, catalyzes the reversible transfer of the terminal phosphate group between ATP and AMP. Plays an important role in cellular energy homeostasis and in adenine nucleotide metabolism. This chain is Adenylate kinase, found in Bacillus cereus (strain B4264).